Here is a 102-residue protein sequence, read N- to C-terminus: Small ribosomal subunit protein uS10 (102 aa).

This sequence belongs to the universal ribosomal protein uS10 family. Part of the 30S ribosomal subunit.

In terms of biological role, involved in the binding of tRNA to the ribosomes. The protein is Small ribosomal subunit protein uS10 of Mesorhizobium japonicum (strain LMG 29417 / CECT 9101 / MAFF 303099) (Mesorhizobium loti (strain MAFF 303099)).